Reading from the N-terminus, the 565-residue chain is Cytokinin dehydrogenase 2 (565 aa).

Residues 1-20 form the signal peptide; sequence MKQEQVRMAVLLMLNCFVKA. N-linked (GlcNAc...) asparagine glycosylation is present at asparagine 64. Positions 74 to 255 constitute an FAD-binding PCMH-type domain; that stretch reads RLAAAAAVLY…TRARIPLAPA (182 aa). Alanine 108, glycine 110, and glycine 112 together coordinate FAD. Histidine 113 bears the Pros-8alpha-FAD histidine mark. Residues serine 114, glutamine 118, aspartate 179, threonine 184, serine 190, isoleucine 194, and isoleucine 245 each contribute to the FAD site. N-linked (GlcNAc...) asparagine glycosylation is present at asparagine 464. FAD is bound by residues tyrosine 517, serine 554, and glutamine 557.

Belongs to the oxygen-dependent FAD-linked oxidoreductase family. Monomer. It depends on FAD as a cofactor. Glycosylated. Mostly expressed in leaves, culms, inflorescence meristems, and flowers, especially in vascular tissues.

The protein localises to the secreted. It is found in the extracellular space. The catalysed reaction is N(6)-dimethylallyladenine + A + H2O = 3-methyl-2-butenal + adenine + AH2. In terms of biological role, catalyzes the oxidation of cytokinins, a family of N(6)-substituted adenine derivatives that are plant hormones, where the substituent is an isopentenyl group. Is a major QTL involved in grain yield. Modulates the number of reproductive organs by regulating the cytokinin accumulation in inflorescence meristems. Acts as negative regulator of panicle branching. The polypeptide is Cytokinin dehydrogenase 2 (Oryza sativa subsp. japonica (Rice)).